The following is an 83-amino-acid chain: Vitellogenesis-inhibiting hormone (83 aa).

Intrachain disulfides connect C15/C52, C32/C48, and C35/C61.

As to expression, found in the sinus glands of both male and female. Found also in the brain; the neuroendocrine structures of the protocerebrum.

It is found in the secreted. In terms of biological role, inhibits secondary vitellogenesis in females. Has no hyperglycemic or molt-inhibiting activity. This chain is Vitellogenesis-inhibiting hormone, found in Armadillidium vulgare (Pillbug).